A 930-amino-acid polypeptide reads, in one-letter code: Isoleucine--tRNA ligase (930 aa).

A 'HIGH' region motif is present at residues 57 to 67 (PYANGNIHVGH). Residue Glu-554 participates in L-isoleucyl-5'-AMP binding. The 'KMSKS' region motif lies at 595–599 (KMSKS). ATP is bound at residue Lys-598. The Zn(2+) site is built by Cys-888, Cys-891, Cys-908, and Cys-911.

Belongs to the class-I aminoacyl-tRNA synthetase family. IleS type 1 subfamily. As to quaternary structure, monomer. Zn(2+) is required as a cofactor.

It is found in the cytoplasm. It carries out the reaction tRNA(Ile) + L-isoleucine + ATP = L-isoleucyl-tRNA(Ile) + AMP + diphosphate. In terms of biological role, catalyzes the attachment of isoleucine to tRNA(Ile). As IleRS can inadvertently accommodate and process structurally similar amino acids such as valine, to avoid such errors it has two additional distinct tRNA(Ile)-dependent editing activities. One activity is designated as 'pretransfer' editing and involves the hydrolysis of activated Val-AMP. The other activity is designated 'posttransfer' editing and involves deacylation of mischarged Val-tRNA(Ile). The chain is Isoleucine--tRNA ligase from Streptococcus gordonii (strain Challis / ATCC 35105 / BCRC 15272 / CH1 / DL1 / V288).